A 274-amino-acid chain; its full sequence is Cytochrome b-c1 complex subunit Rieske, mitochondrial (274 aa).

Residues 79-103 (SHTDIKVPDFSDYRRSEVLDTTKSS) lie on the Mitochondrial matrix side of the membrane. Residues 104 to 140 (RESSDARKGFSYLVTATTAVGVTYAAKSIVTQFVSSM) form a helical membrane-spanning segment. Residues 141 to 274 (SASADVLAMS…FTSDDLVIVG (134 aa)) are Mitochondrial intermembrane-facing. The 86-residue stretch at 187-272 (EAAVELSQLR…YEFTSDDLVI (86 aa)) folds into the Rieske domain. [2Fe-2S] cluster-binding residues include cysteine 217, histidine 219, cysteine 236, histidine 239, and serine 241. A disulfide bridge links cysteine 222 with cysteine 238.

It belongs to the Rieske iron-sulfur protein family. In terms of assembly, component of the ubiquinol-cytochrome c oxidoreductase (cytochrome b-c1 complex, complex III, CIII), a multisubunit enzyme composed of 11 subunits. The complex is composed of 3 respiratory subunits cytochrome b, cytochrome c1 and Rieske protein UQCRFS1, 2 core protein subunits UQCRC1/QCR1 and UQCRC2/QCR2, and 6 low-molecular weight protein subunits UQCRH/QCR6, UQCRB/QCR7, UQCRQ/QCR8, UQCR10/QCR9, UQCR11/QCR10 and subunit 9, the cleavage product of Rieske protein UQCRFS1. The complex exists as an obligatory dimer and forms supercomplexes (SCs) in the inner mitochondrial membrane with NADH-ubiquinone oxidoreductase (complex I, CI) and cytochrome c oxidase (complex IV, CIV), resulting in different assemblies (supercomplex SCI(1)III(2)IV(1) and megacomplex MCI(2)III(2)IV(2)). Incorporation of the Rieske protein UQCRFS1 is the penultimate step in complex III assembly. Interacts with TTC19, which is involved in the clearance of UQCRFS1 fragments. As to quaternary structure, component of the ubiquinol-cytochrome c oxidoreductase (cytochrome b-c1 complex, complex III, CIII). Subunit 9 corresponds to the mitochondrial targeting sequence (MTS) of Rieske protein UQCRFS1. It is retained after processing and incorporated inside complex III, where it remains bound to the complex and localizes between the 2 core subunits UQCRC1/QCR1 and UQCRC2/QCR2. [2Fe-2S] cluster serves as cofactor. Post-translationally, proteolytic processing is necessary for the correct insertion of UQCRFS1 in the complex III dimer. Several fragments are generated during UQCRFS1 insertion, most probably due to the endogenous matrix-processing peptidase (MPP) activity of the 2 core protein subunits UQCRC1/QCR1 and UQCRC2/QCR2, which are homologous to the 2 mitochondrial-processing peptidase (MPP) subunits beta-MPP and alpha-MPP respectively. The action of the protease is also necessary for the clearance of the UQCRFS1 fragments.

The protein resides in the mitochondrion inner membrane. The catalysed reaction is a quinol + 2 Fe(III)-[cytochrome c](out) = a quinone + 2 Fe(II)-[cytochrome c](out) + 2 H(+)(out). Functionally, component of the ubiquinol-cytochrome c oxidoreductase, a multisubunit transmembrane complex that is part of the mitochondrial electron transport chain which drives oxidative phosphorylation. The respiratory chain contains 3 multisubunit complexes succinate dehydrogenase (complex II, CII), ubiquinol-cytochrome c oxidoreductase (cytochrome b-c1 complex, complex III, CIII) and cytochrome c oxidase (complex IV, CIV), that cooperate to transfer electrons derived from NADH and succinate to molecular oxygen, creating an electrochemical gradient over the inner membrane that drives transmembrane transport and the ATP synthase. The cytochrome b-c1 complex catalyzes electron transfer from ubiquinol to cytochrome c, linking this redox reaction to translocation of protons across the mitochondrial inner membrane, with protons being carried across the membrane as hydrogens on the quinol. In the process called Q cycle, 2 protons are consumed from the matrix, 4 protons are released into the intermembrane space and 2 electrons are passed to cytochrome c. The Rieske protein is a catalytic core subunit containing a [2Fe-2S] iron-sulfur cluster. It cycles between 2 conformational states during catalysis to transfer electrons from the quinol bound in the Q(0) site in cytochrome b to cytochrome c1. Incorporation of UQCRFS1 is the penultimate step in complex III assembly. In terms of biological role, component of the ubiquinol-cytochrome c oxidoreductase (cytochrome b-c1 complex, complex III, CIII). UQCRFS1 undergoes proteolytic processing once it is incorporated in the complex III dimer. One of the fragments, called subunit 9, corresponds to its mitochondrial targeting sequence (MTS). The proteolytic processing is necessary for the correct insertion of UQCRFS1 in the complex III dimer, but the persistence of UQCRFS1-derived fragments may prevent newly imported UQCRFS1 to be processed and assembled into complex III and is detrimental for the complex III structure and function. This chain is Cytochrome b-c1 complex subunit Rieske, mitochondrial (UQCRFS1), found in Aotus azarae (Azara's night monkey).